The following is a 121-amino-acid chain: Large ribosomal subunit protein bL19 (121 aa).

Belongs to the bacterial ribosomal protein bL19 family.

Its function is as follows. This protein is located at the 30S-50S ribosomal subunit interface and may play a role in the structure and function of the aminoacyl-tRNA binding site. The chain is Large ribosomal subunit protein bL19 from Chlorobium phaeovibrioides (strain DSM 265 / 1930) (Prosthecochloris vibrioformis (strain DSM 265)).